We begin with the raw amino-acid sequence, 241 residues long: Carboxy-S-adenosyl-L-methionine synthase (241 aa).

S-adenosyl-L-methionine contacts are provided by residues Y38, 63–65 (GCS), 88–89 (DN), 116–117 (DI), N131, and R198.

Belongs to the class I-like SAM-binding methyltransferase superfamily. Cx-SAM synthase family. As to quaternary structure, homodimer.

It carries out the reaction prephenate + S-adenosyl-L-methionine = carboxy-S-adenosyl-L-methionine + 3-phenylpyruvate + H2O. In terms of biological role, catalyzes the conversion of S-adenosyl-L-methionine (SAM) to carboxy-S-adenosyl-L-methionine (Cx-SAM). This Actinobacillus succinogenes (strain ATCC 55618 / DSM 22257 / CCUG 43843 / 130Z) protein is Carboxy-S-adenosyl-L-methionine synthase.